Here is a 317-residue protein sequence, read N- to C-terminus: Melanocyte-stimulating hormone receptor (317 aa).

Over 1-37 (MPMQGAQRRLLGSLNSTPTATPNLGLAANHTGAPCLE) the chain is Extracellular. A glycan (N-linked (GlcNAc...) asparagine) is linked at asparagine 29. The chain crosses the membrane as a helical span at residues 38 to 63 (VSIPDGLFLSLGLVSLVENVLVVAAI). Residues 64-72 (AKNRNLHSP) lie on the Cytoplasmic side of the membrane. A helical membrane pass occupies residues 73-93 (MYCFICCLALSDLLVSGSNML). At 94-118 (EMAVILLLEAGALATRASVVQQLQN) the chain is on the extracellular side. Residues 119-140 (TIDVLTCSSMLCSLCFLGAIAV) form a helical membrane-spanning segment. Residues 141–163 (DRYVSIFYALRYHSIVTLPRARR) lie on the Cytoplasmic side of the membrane. Residues 164-183 (AIAAIWVASVLSSTLFIAYC) form a helical membrane-spanning segment. Residues 184–191 (DHAAVLLC) are Extracellular-facing. Residues 192–211 (LVVFFLAMLVLMAVLYVHML) form a helical membrane-spanning segment. Topologically, residues 212–240 (ARACQHAQGITRLHKRQLPAHQGFGLRGA) are cytoplasmic. A helical transmembrane segment spans residues 241-266 (ATLTILLGIFFVCWGPFFLHLMLVVL). Residues 267 to 279 (CPQHLTCSCIFKN) are Extracellular-facing. The chain crosses the membrane as a helical span at residues 280–300 (FKVFLTLIICNTIIDPLIYAF). Residues 301–317 (RSQELCRTLKEVLLCSW) lie on the Cytoplasmic side of the membrane. The S-palmitoyl cysteine moiety is linked to residue cysteine 315.

This sequence belongs to the G-protein coupled receptor 1 family. In terms of assembly, interacts with MGRN1, but does not undergo MGRN1-mediated ubiquitination; this interaction competes with GNAS-binding and thus inhibits agonist-induced cAMP production. Interacts with OPN3; the interaction results in a decrease in MC1R-mediated cAMP signaling and ultimately a decrease in melanin production in melanocytes.

The protein localises to the cell membrane. Its function is as follows. Receptor for MSH (alpha, beta and gamma) and ACTH. The activity of this receptor is mediated by G proteins which activate adenylate cyclase. Mediates melanogenesis, the production of eumelanin (black/brown) and phaeomelanin (red/yellow), via regulation of cAMP signaling in melanocytes. The polypeptide is Melanocyte-stimulating hormone receptor (MC1R) (Alouatta sara (Bolivian red howler monkey)).